Consider the following 437-residue polypeptide: Serine hydroxymethyltransferase (437 aa).

(6S)-5,6,7,8-tetrahydrofolate contacts are provided by residues Leu-130 and Gly-134–Leu-136. Lys-239 carries the post-translational modification N6-(pyridoxal phosphate)lysine.

The protein belongs to the SHMT family. Homodimer. Pyridoxal 5'-phosphate is required as a cofactor.

It is found in the cytoplasm. The catalysed reaction is (6R)-5,10-methylene-5,6,7,8-tetrahydrofolate + glycine + H2O = (6S)-5,6,7,8-tetrahydrofolate + L-serine. Its pathway is one-carbon metabolism; tetrahydrofolate interconversion. It functions in the pathway amino-acid biosynthesis; glycine biosynthesis; glycine from L-serine: step 1/1. In terms of biological role, catalyzes the reversible interconversion of serine and glycine with tetrahydrofolate (THF) serving as the one-carbon carrier. This reaction serves as the major source of one-carbon groups required for the biosynthesis of purines, thymidylate, methionine, and other important biomolecules. Also exhibits THF-independent aldolase activity toward beta-hydroxyamino acids, producing glycine and aldehydes, via a retro-aldol mechanism. This is Serine hydroxymethyltransferase from Bartonella tribocorum (strain CIP 105476 / IBS 506).